A 208-amino-acid polypeptide reads, in one-letter code: FMN-dependent NADH:quinone oxidoreductase 4 (208 aa).

Belongs to the azoreductase type 1 family. Homodimer. The cofactor is FMN.

The enzyme catalyses 2 a quinone + NADH + H(+) = 2 a 1,4-benzosemiquinone + NAD(+). It catalyses the reaction N,N-dimethyl-1,4-phenylenediamine + anthranilate + 2 NAD(+) = 2-(4-dimethylaminophenyl)diazenylbenzoate + 2 NADH + 2 H(+). In terms of biological role, quinone reductase that provides resistance to thiol-specific stress caused by electrophilic quinones. Also exhibits azoreductase activity. Catalyzes the reductive cleavage of the azo bond in aromatic azo compounds to the corresponding amines. The protein is FMN-dependent NADH:quinone oxidoreductase 4 of Bacillus cereus (strain ATCC 10987 / NRS 248).